The chain runs to 241 residues: uncharacterized protein (241 aa).

In terms of domain architecture, GGDEF spans 84–216 (TVVSLVVCDL…APGPVVAGRD (133 aa)). A disordered region spans residues 215–241 (RDGEVVRLADSPPKSAHDRRRLRGNRP). Residues 231-241 (HDRRRLRGNRP) are compositionally biased toward basic residues.

This is an uncharacterized protein from Streptomyces griseus.